The chain runs to 319 residues: 4-hydroxy-3-methylbut-2-enyl diphosphate reductase (319 aa).

A [4Fe-4S] cluster-binding site is contributed by Cys-18. The (2E)-4-hydroxy-3-methylbut-2-enyl diphosphate site is built by His-47 and His-81. Dimethylallyl diphosphate-binding residues include His-47 and His-81. Isopentenyl diphosphate-binding residues include His-47 and His-81. Cys-103 contributes to the [4Fe-4S] cluster binding site. His-131 contacts (2E)-4-hydroxy-3-methylbut-2-enyl diphosphate. A dimethylallyl diphosphate-binding site is contributed by His-131. His-131 serves as a coordination point for isopentenyl diphosphate. Glu-133 acts as the Proton donor in catalysis. Thr-172 serves as a coordination point for (2E)-4-hydroxy-3-methylbut-2-enyl diphosphate. Cys-202 provides a ligand contact to [4Fe-4S] cluster. Residues Ser-230, Ser-231, Asn-232, and Ser-275 each coordinate (2E)-4-hydroxy-3-methylbut-2-enyl diphosphate. Ser-230, Ser-231, Asn-232, and Ser-275 together coordinate dimethylallyl diphosphate. Residues Ser-230, Ser-231, Asn-232, and Ser-275 each contribute to the isopentenyl diphosphate site.

Belongs to the IspH family. Requires [4Fe-4S] cluster as cofactor.

The enzyme catalyses isopentenyl diphosphate + 2 oxidized [2Fe-2S]-[ferredoxin] + H2O = (2E)-4-hydroxy-3-methylbut-2-enyl diphosphate + 2 reduced [2Fe-2S]-[ferredoxin] + 2 H(+). It carries out the reaction dimethylallyl diphosphate + 2 oxidized [2Fe-2S]-[ferredoxin] + H2O = (2E)-4-hydroxy-3-methylbut-2-enyl diphosphate + 2 reduced [2Fe-2S]-[ferredoxin] + 2 H(+). The protein operates within isoprenoid biosynthesis; dimethylallyl diphosphate biosynthesis; dimethylallyl diphosphate from (2E)-4-hydroxy-3-methylbutenyl diphosphate: step 1/1. Its pathway is isoprenoid biosynthesis; isopentenyl diphosphate biosynthesis via DXP pathway; isopentenyl diphosphate from 1-deoxy-D-xylulose 5-phosphate: step 6/6. Its function is as follows. Catalyzes the conversion of 1-hydroxy-2-methyl-2-(E)-butenyl 4-diphosphate (HMBPP) into a mixture of isopentenyl diphosphate (IPP) and dimethylallyl diphosphate (DMAPP). Acts in the terminal step of the DOXP/MEP pathway for isoprenoid precursor biosynthesis. The sequence is that of 4-hydroxy-3-methylbut-2-enyl diphosphate reductase from Beijerinckia indica subsp. indica (strain ATCC 9039 / DSM 1715 / NCIMB 8712).